The chain runs to 140 residues: Small ribosomal subunit protein uS12 (140 aa).

Residues 1-44 form a disordered region; it reads MPTFNQLVRKGRKTMEKNSQAPALQKGFNSLRKKTTDASAPQKR. 3-methylthioaspartic acid is present on D102. A disordered region spans residues 120–140; that stretch reads VAKRRQARSKYGAKRPKEAKK. Residues 121 to 140 show a composition bias toward basic residues; sequence AKRRQARSKYGAKRPKEAKK.

The protein belongs to the universal ribosomal protein uS12 family. Part of the 30S ribosomal subunit. Contacts proteins S8 and S17. May interact with IF1 in the 30S initiation complex.

With S4 and S5 plays an important role in translational accuracy. Its function is as follows. Interacts with and stabilizes bases of the 16S rRNA that are involved in tRNA selection in the A site and with the mRNA backbone. Located at the interface of the 30S and 50S subunits, it traverses the body of the 30S subunit contacting proteins on the other side and probably holding the rRNA structure together. The combined cluster of proteins S8, S12 and S17 appears to hold together the shoulder and platform of the 30S subunit. The chain is Small ribosomal subunit protein uS12 from Lachnoclostridium phytofermentans (strain ATCC 700394 / DSM 18823 / ISDg) (Clostridium phytofermentans).